Reading from the N-terminus, the 713-residue chain is Protein-glucosylgalactosylhydroxylysine glucosidase (713 aa).

The first 21 residues, 1–21 (MIINSQEYLQPPQWWNERVEA), serve as a signal peptide directing secretion. Asn-104, Asn-160, Asn-171, Asn-186, and Asn-283 each carry an N-linked (GlcNAc...) asparagine glycan. Substrate is bound at residue 317-318 (WD). Asn-361 carries an N-linked (GlcNAc...) asparagine glycan. Glu-451 functions as the Proton donor in the catalytic mechanism. Asn-457 and Asn-481 each carry an N-linked (GlcNAc...) asparagine glycan. 521-522 (KQ) provides a ligand contact to substrate. Asn-535, Asn-576, and Asn-662 each carry an N-linked (GlcNAc...) asparagine glycan.

It belongs to the glycosyl hydrolase 65 family.

It is found in the secreted. It carries out the reaction (5R)-5-O-[alpha-D-glucosyl-(1-&gt;2)-beta-D-galactosyl]-5-hydroxy-L-lysyl-[collagen] + H2O = (5R)-5-O-(beta-D-galactosyl)-5-hydroxy-L-lysyl-[collagen] + D-glucose. Catalyzes the hydrolysis of glucose from the disaccharide unit linked to hydroxylysine residues of collagen and collagen-like proteins. This is Protein-glucosylgalactosylhydroxylysine glucosidase from Dictyostelium discoideum (Social amoeba).